The following is a 217-amino-acid chain: Protein-L-isoaspartate O-methyltransferase 2 (217 aa).

Residue Ser-64 is part of the active site.

Belongs to the methyltransferase superfamily. L-isoaspartyl/D-aspartyl protein methyltransferase family.

The protein localises to the cytoplasm. The enzyme catalyses [protein]-L-isoaspartate + S-adenosyl-L-methionine = [protein]-L-isoaspartate alpha-methyl ester + S-adenosyl-L-homocysteine. In terms of biological role, catalyzes the methyl esterification of L-isoaspartyl residues in peptides and proteins that result from spontaneous decomposition of normal L-aspartyl and L-asparaginyl residues. It plays a role in the repair and/or degradation of damaged proteins. This chain is Protein-L-isoaspartate O-methyltransferase 2, found in Rhodopseudomonas palustris (strain HaA2).